A 95-amino-acid chain; its full sequence is Integration host factor subunit beta (95 aa).

The segment at 52–95 (SLHHRPPRVGRNPKTGESVHLPSRRVPHFKPGKELRDRVNSIKD) is disordered. Residues 82-95 (PGKELRDRVNSIKD) are compositionally biased toward basic and acidic residues.

The protein belongs to the bacterial histone-like protein family. As to quaternary structure, heterodimer of an alpha and a beta chain.

Its function is as follows. This protein is one of the two subunits of integration host factor, a specific DNA-binding protein that functions in genetic recombination as well as in transcriptional and translational control. This chain is Integration host factor subunit beta, found in Methylococcus capsulatus (strain ATCC 33009 / NCIMB 11132 / Bath).